Consider the following 109-residue polypeptide: MVIVYLAIACGFGALVRYFFSRYNQASKLPLGTLIANLLGCFLIGVFYNHVESKEVYAILATGFCGGLTTFSTLNDELQRLLSDKKVFYSYLILTYLGGLVAIFLGILL.

A run of 4 helical transmembrane segments spans residues 1–21 (MVIVYLAIACGFGALVRYFFS), 29–49 (LPLGTLIANLLGCFLIGVFYN), 55–75 (EVYAILATGFCGGLTTFSTLN), and 87–107 (VFYSYLILTYLGGLVAIFLGI). Residues glycine 66 and threonine 69 each coordinate Na(+).

Belongs to the fluoride channel Fluc/FEX (TC 1.A.43) family.

It localises to the cell membrane. It carries out the reaction fluoride(in) = fluoride(out). Its activity is regulated as follows. Na(+) is not transported, but it plays an essential structural role and its presence is essential for fluoride channel function. Functionally, fluoride-specific ion channel. Important for reducing fluoride concentration in the cell, thus reducing its toxicity. In Streptococcus pneumoniae (strain ATCC BAA-255 / R6), this protein is Fluoride-specific ion channel FluC 1.